The chain runs to 659 residues: Methionine--tRNA ligase (659 aa).

Positions 13–23 (YYPSGNLHIGH) match the 'HIGH' region motif. The 'KMSKS' region signature appears at 308-312 (KMSKS). ATP is bound at residue K311. Residues 559 to 659 (DFDKVEIKAA…SAIPNGAVIK (101 aa)) enclose the tRNA-binding domain.

It belongs to the class-I aminoacyl-tRNA synthetase family. MetG type 2B subfamily. In terms of assembly, homodimer.

The protein resides in the cytoplasm. The catalysed reaction is tRNA(Met) + L-methionine + ATP = L-methionyl-tRNA(Met) + AMP + diphosphate. Functionally, is required not only for elongation of protein synthesis but also for the initiation of all mRNA translation through initiator tRNA(fMet) aminoacylation. The polypeptide is Methionine--tRNA ligase (Staphylococcus haemolyticus (strain JCSC1435)).